We begin with the raw amino-acid sequence, 80 residues long: uncharacterized protein (80 aa).

This is an uncharacterized protein from Pseudoalteromonas phage PM2 (Bacteriophage PM2).